Here is a 458-residue protein sequence, read N- to C-terminus: ATP-dependent protease ATPase subunit HslU (458 aa).

ATP contacts are provided by residues Val18, 60 to 65 (GVGKTE), Asp270, Glu335, and Arg407.

This sequence belongs to the ClpX chaperone family. HslU subfamily. In terms of assembly, a double ring-shaped homohexamer of HslV is capped on each side by a ring-shaped HslU homohexamer. The assembly of the HslU/HslV complex is dependent on binding of ATP.

It localises to the cytoplasm. In terms of biological role, ATPase subunit of a proteasome-like degradation complex; this subunit has chaperone activity. The binding of ATP and its subsequent hydrolysis by HslU are essential for unfolding of protein substrates subsequently hydrolyzed by HslV. HslU recognizes the N-terminal part of its protein substrates and unfolds these before they are guided to HslV for hydrolysis. This chain is ATP-dependent protease ATPase subunit HslU, found in Desulfitobacterium hafniense (strain DSM 10664 / DCB-2).